Consider the following 50-residue polypeptide: Small ribosomal subunit protein eS31 (50 aa).

Positions 22, 25, 40, and 43 each coordinate Zn(2+). A C4-type zinc finger spans residues 22 to 43; sequence CPRCGPGVFMADHGDRWACGKC.

It belongs to the eukaryotic ribosomal protein eS31 family. Part of the 30S ribosomal subunit. Requires Zn(2+) as cofactor.

This is Small ribosomal subunit protein eS31 from Pyrococcus horikoshii (strain ATCC 700860 / DSM 12428 / JCM 9974 / NBRC 100139 / OT-3).